A 354-amino-acid polypeptide reads, in one-letter code: Chorismate synthase (354 aa).

R48 lines the NADP(+) pocket. Residues 125–127 (RSS), 239–240 (NA), G280, 295–299 (KPVAT), and R321 each bind FMN.

Belongs to the chorismate synthase family. As to quaternary structure, homotetramer. Requires FMNH2 as cofactor.

It catalyses the reaction 5-O-(1-carboxyvinyl)-3-phosphoshikimate = chorismate + phosphate. Its pathway is metabolic intermediate biosynthesis; chorismate biosynthesis; chorismate from D-erythrose 4-phosphate and phosphoenolpyruvate: step 7/7. In terms of biological role, catalyzes the anti-1,4-elimination of the C-3 phosphate and the C-6 proR hydrogen from 5-enolpyruvylshikimate-3-phosphate (EPSP) to yield chorismate, which is the branch point compound that serves as the starting substrate for the three terminal pathways of aromatic amino acid biosynthesis. This reaction introduces a second double bond into the aromatic ring system. This Christiangramia forsetii (strain DSM 17595 / CGMCC 1.15422 / KT0803) (Gramella forsetii) protein is Chorismate synthase.